Here is a 263-residue protein sequence, read N- to C-terminus: Endonuclease NucS (263 aa).

The protein belongs to the NucS endonuclease family.

Its subcellular location is the cytoplasm. Its function is as follows. Cleaves both 3' and 5' ssDNA extremities of branched DNA structures. The polypeptide is Endonuclease NucS (Methanocaldococcus jannaschii (strain ATCC 43067 / DSM 2661 / JAL-1 / JCM 10045 / NBRC 100440) (Methanococcus jannaschii)).